The chain runs to 86 residues: Neurotoxin E1x (86 aa).

The first 19 residues, 1 to 19 (MNSLLMITACLVVIGTVWA), serve as a signal peptide directing secretion. An LCN-type CS-alpha/beta domain is found at 20 to 84 (KEGYLVDVKG…TWPLPNKTCG (65 aa)). 4 cysteine pairs are disulfide-bonded: Cys30–Cys83, Cys34–Cys59, Cys43–Cys64, and Cys47–Cys66. A Cysteine amide modification is found at Cys83.

This sequence belongs to the long (4 C-C) scorpion toxin superfamily. Sodium channel inhibitor family. Beta subfamily. In terms of tissue distribution, expressed by the venom gland.

Its subcellular location is the secreted. Binds to sodium channels (Nav) and inhibits the inactivation of the activated channels, thereby blocking neuronal transmission. The sequence is that of Neurotoxin E1x from Centruroides sculpturatus (Arizona bark scorpion).